The primary structure comprises 161 residues: 3-isopropylmalate dehydratase small subunit (161 aa).

This sequence belongs to the LeuD family. LeuD type 2 subfamily. Heterodimer of LeuC and LeuD.

It carries out the reaction (2R,3S)-3-isopropylmalate = (2S)-2-isopropylmalate. It participates in amino-acid biosynthesis; L-leucine biosynthesis; L-leucine from 3-methyl-2-oxobutanoate: step 2/4. Its function is as follows. Catalyzes the isomerization between 2-isopropylmalate and 3-isopropylmalate, via the formation of 2-isopropylmaleate. The sequence is that of 3-isopropylmalate dehydratase small subunit from Clostridium beijerinckii (strain ATCC 51743 / NCIMB 8052) (Clostridium acetobutylicum).